Here is a 194-residue protein sequence, read N- to C-terminus: uncharacterized protein (194 aa).

Belongs to the calycin superfamily. Fatty-acid binding protein (FABP) family.

This is an uncharacterized protein from Caenorhabditis elegans.